The primary structure comprises 103 residues: Small ribosomal subunit protein uS10 (103 aa).

The protein belongs to the universal ribosomal protein uS10 family. As to quaternary structure, part of the 30S ribosomal subunit.

In terms of biological role, involved in the binding of tRNA to the ribosomes. The polypeptide is Small ribosomal subunit protein uS10 (Ralstonia pickettii (strain 12J)).